The sequence spans 175 residues: MARYQCPDCQYVYDESKGEEHEGFAPNTPWIVIPEDWCCPDCAVRDKLDFVLIEGSTGEKNISSNNTLSVSAKVSSSDVNTEISNTTMSAEIALDVATEGQHLNGRKPRVTNLQSGAAFLKWICITCGHIYDEALGDEVEGFAPGTRFEDIPNDWCCPDCGATKEDYVLYQEKLG.

Rubredoxin-like domains lie at 1–53 (MARY…FVLI) and 119–170 (FLKW…YVLY). Fe cation contacts are provided by cysteine 6, cysteine 9, cysteine 39, cysteine 42, cysteine 124, cysteine 127, cysteine 157, and cysteine 160.

The protein belongs to the rubredoxin family. Fe(3+) is required as a cofactor.

The protein resides in the cytoplasm. Its pathway is hydrocarbon metabolism; alkane degradation. Its function is as follows. Involved in the hydrocarbon hydroxylating system, which transfers electrons from NADH to rubredoxin reductase and then through rubredoxin to alkane 1 monooxygenase. This chain is Rubredoxin-1 (alkG), found in Pseudomonas putida (Arthrobacter siderocapsulatus).